A 201-amino-acid polypeptide reads, in one-letter code: Alanine--tRNA ligase (201 aa).

This sequence belongs to the class-II aminoacyl-tRNA synthetase family. Zn(2+) serves as cofactor.

Its subcellular location is the cytoplasm. The catalysed reaction is tRNA(Ala) + L-alanine + ATP = L-alanyl-tRNA(Ala) + AMP + diphosphate. Its function is as follows. Catalyzes the attachment of alanine to tRNA(Ala) in a two-step reaction: alanine is first activated by ATP to form Ala-AMP and then transferred to the acceptor end of tRNA(Ala). Also edits incorrectly charged Ser-tRNA(Ala) and Gly-tRNA(Ala) via its editing domain. The protein is Alanine--tRNA ligase (alaS) of Rhizobium leguminosarum bv. viciae.